Here is a 498-residue protein sequence, read N- to C-terminus: Envelope glycoprotein G (498 aa).

Residues 1–20 (MKWATWILALGLLVVRTVVA) form the signal peptide. Residues Asn-56, Asn-86, Asn-142, and Asn-226 are each glycosylated (N-linked (GlcNAc...) asparagine; by host). 2 tandem repeats follow at residues 271–292 (EEEA…VGSP) and 308–329 (EEDE…VGSP). The tract at residues 271–329 (EEEAELTSSDLDNIEIEVVGSPAAPAEGPATEEGRGAEEDEELTSSDLDNIEIEVVGSP) is 2 X 22 AA repeats of E-E-[DE]-[AE]-E-L-T-S-S-D-L-D-N-I-E-I-E-V-V-G-S-P. Residues 290–377 (GSPAAPAEGP…HRLPPEPTFV (88 aa)) are disordered. Positions 292-301 (PAAPAEGPAT) are enriched in low complexity. The span at 308–322 (EEDEELTSSDLDNIE) shows a compositional bias: acidic residues. The span at 329-342 (PRPPASSPPPPPPR) shows a compositional bias: pro residues. Residues 346-364 (RGRDHDHDHGHHRADDRGP) are compositionally biased toward basic and acidic residues. The N-linked (GlcNAc...) asparagine; by host glycan is linked to Asn-443. The chain crosses the membrane as a helical span at residues 463–483 (VALAGLVVVGIVIMCLHMAII).

The protein belongs to the alphaherpesvirinae glycoprotein G family.

The protein localises to the virion membrane. Chemokine-binding protein that inhibits neutrophils' chemotaxis. This is Envelope glycoprotein G (gG) from Sus scrofa (Pig).